The primary structure comprises 328 residues: Small neutral protease regulatory protein (328 aa).

Residues 1 to 60 (MELEVRHLRALCAIADAGSLHRAARRLGVAQPTLSTQLTRIEQALGGPLFTRERTGCRPT) enclose the HTH lysR-type domain. The segment at residues 20-39 (LHRAARRLGVAQPTLSTQLT) is a DNA-binding region (H-T-H motif).

Belongs to the LysR transcriptional regulatory family.

In terms of biological role, transcriptional trans-activator of the gene (mprA) for the small neutral protease. The polypeptide is Small neutral protease regulatory protein (mprR) (Streptomyces coelicolor (strain ATCC BAA-471 / A3(2) / M145)).